We begin with the raw amino-acid sequence, 327 residues long: Glycerol-3-phosphate dehydrogenase [NAD(P)+] (327 aa).

Residues Ser-10, Phe-11, Arg-31, and Lys-108 each contribute to the NADPH site. Sn-glycerol 3-phosphate contacts are provided by Lys-108, Gly-136, and Ser-138. NADPH is bound at residue Ala-140. Positions 191, 246, 256, 257, and 258 each coordinate sn-glycerol 3-phosphate. Lys-191 functions as the Proton acceptor in the catalytic mechanism. Residue Arg-257 participates in NADPH binding. Residues Leu-281 and Glu-283 each coordinate NADPH.

It belongs to the NAD-dependent glycerol-3-phosphate dehydrogenase family.

Its subcellular location is the cytoplasm. It carries out the reaction sn-glycerol 3-phosphate + NAD(+) = dihydroxyacetone phosphate + NADH + H(+). It catalyses the reaction sn-glycerol 3-phosphate + NADP(+) = dihydroxyacetone phosphate + NADPH + H(+). The protein operates within membrane lipid metabolism; glycerophospholipid metabolism. Functionally, catalyzes the reduction of the glycolytic intermediate dihydroxyacetone phosphate (DHAP) to sn-glycerol 3-phosphate (G3P), the key precursor for phospholipid synthesis. The sequence is that of Glycerol-3-phosphate dehydrogenase [NAD(P)+] from Ehrlichia ruminantium (strain Gardel).